Reading from the N-terminus, the 1174-residue chain is HEAT repeat-containing protein 6 (1174 aa).

The stretch at 168–207 (NELLGPTGILVNLCDPSQPDPELWREAIHCMANLCLGVPG) is one HEAT 1 repeat. 2 disordered regions span residues 304 to 346 (GRSP…EELK) and 373 to 392 (LGPQ…KDHF). Over residues 323 to 335 (SKKKRKAGKQKKG) the composition is skewed to basic residues. Over residues 336–346 (HQGEESKEELK) the composition is skewed to basic and acidic residues. 3 HEAT repeats span residues 460–498 (GIGS…GSKQ), 523–560 (SIRE…NAPY), and 566–603 (GLLT…AQVS). The interval 619 to 648 (SQNSGSATPSDPESNRKESMLEGGKKNGLH) is disordered. The segment covering 631 to 648 (ESNRKESMLEGGKKNGLH) has biased composition (basic and acidic residues).

This is HEAT repeat-containing protein 6 (heatr6) from Xenopus laevis (African clawed frog).